The chain runs to 636 residues: Translation factor GUF1 homolog, chloroplastic (636 aa).

One can recognise a tr-type G domain in the interval 31-212 (NLARNFSIIA…AIVTKIPPPQ (182 aa)). GTP is bound by residues 40–47 (AHIDHGKS), 105–109 (DTPGH), and 159–162 (NKID).

The protein belongs to the TRAFAC class translation factor GTPase superfamily. Classic translation factor GTPase family. LepA subfamily.

Its subcellular location is the plastid. The protein resides in the chloroplast. The enzyme catalyses GTP + H2O = GDP + phosphate + H(+). In terms of biological role, promotes chloroplast protein synthesis. May act as a fidelity factor of the translation reaction, by catalyzing a one-codon backward translocation of tRNAs on improperly translocated ribosomes. The sequence is that of Translation factor GUF1 homolog, chloroplastic from Oryza sativa subsp. indica (Rice).